Consider the following 138-residue polypeptide: Acidic phospholipase A2 inhibitor chain HPD-1I (138 aa).

The signal sequence occupies residues 1–16 (MRTLWIVAVCLIGVEG). Intrachain disulfides connect Cys-42–Cys-131, Cys-44–Cys-60, Cys-59–Cys-111, Cys-65–Cys-138, Cys-66–Cys-104, Cys-73–Cys-97, and Cys-91–Cys-102.

As to quaternary structure, heterodimer of an acidic and a basic chain; non-covalently linked. The basic chain is toxic and has phospholipase A2 activity (chain HDP-1P (AC Q1RP79) or HDP-2P (AC Q1RP78)) and the acidic chain is non-toxic and functions as its inhibitor (chain HPD-1I). In terms of tissue distribution, expressed by the venom gland.

It localises to the secreted. Its function is as follows. Heterodimer: slightly affects neuromuscular transmission acting presynaptically. It has a low catalytic activity, a low anticoagulant activity and weakly inhibits ADP-induced platelet aggregation. Monomer: has no activity (neurotoxic, catalytic, anticoagulant and a ADP-induced platelet aggregation), but inhibits phospholipase A2. This Vipera nikolskii (Nikolsky's adder) protein is Acidic phospholipase A2 inhibitor chain HPD-1I.